Here is a 276-residue protein sequence, read N- to C-terminus: Putative translation initiation factor eIF-2B subunit 2-like (276 aa).

It belongs to the eIF-2B alpha/beta/delta subunits family. Complex of two different subunits.

In terms of biological role, catalyzes the exchange of initiation factor 2-bound GDP for GTP. This chain is Putative translation initiation factor eIF-2B subunit 2-like, found in Pyrococcus abyssi (strain GE5 / Orsay).